A 115-amino-acid polypeptide reads, in one-letter code: Large ribosomal subunit protein bL19 (115 aa).

The protein belongs to the bacterial ribosomal protein bL19 family.

In terms of biological role, this protein is located at the 30S-50S ribosomal subunit interface and may play a role in the structure and function of the aminoacyl-tRNA binding site. This chain is Large ribosomal subunit protein bL19, found in Tropheryma whipplei (strain TW08/27) (Whipple's bacillus).